We begin with the raw amino-acid sequence, 310 residues long: tRNA dimethylallyltransferase (310 aa).

Glycine 24–threonine 31 lines the ATP pocket. Threonine 26–threonine 31 contributes to the substrate binding site. The tract at residues aspartate 49 to glutamine 52 is interaction with substrate tRNA.

The protein belongs to the IPP transferase family. In terms of assembly, monomer. Requires Mg(2+) as cofactor.

The enzyme catalyses adenosine(37) in tRNA + dimethylallyl diphosphate = N(6)-dimethylallyladenosine(37) in tRNA + diphosphate. Its function is as follows. Catalyzes the transfer of a dimethylallyl group onto the adenine at position 37 in tRNAs that read codons beginning with uridine, leading to the formation of N6-(dimethylallyl)adenosine (i(6)A). This is tRNA dimethylallyltransferase from Synechococcus sp. (strain CC9311).